The chain runs to 395 residues: Elongation factor Tu (395 aa).

The region spanning 10-204 (KPHVNVGTIG…AVDEYIPEPV (195 aa)) is the tr-type G domain. Residues 19–26 (GHVDHGKT) form a G1 region. A GTP-binding site is contributed by 19–26 (GHVDHGKT). T26 is a binding site for Mg(2+). Residues 60 to 64 (GITIA) form a G2 region. Positions 81–84 (DCPG) are G3. GTP is bound by residues 81-85 (DCPGH) and 136-139 (NKVD). Residues 136 to 139 (NKVD) form a G4 region. Residues 174 to 176 (SAL) form a G5 region.

This sequence belongs to the TRAFAC class translation factor GTPase superfamily. Classic translation factor GTPase family. EF-Tu/EF-1A subfamily. In terms of assembly, monomer.

Its subcellular location is the cytoplasm. It catalyses the reaction GTP + H2O = GDP + phosphate + H(+). In terms of biological role, GTP hydrolase that promotes the GTP-dependent binding of aminoacyl-tRNA to the A-site of ribosomes during protein biosynthesis. The chain is Elongation factor Tu from Exiguobacterium sp. (strain ATCC BAA-1283 / AT1b).